Consider the following 742-residue polypeptide: Feeding circuit activating peptides (742 aa).

The N-terminal stretch at 1-22 (MTFAASFRALLCVLFCAALVHC) is a signal peptide. The propeptide occupies 23-98 (KTRTKRYVPH…YGALADRDVD (76 aa)). A propeptide spans 117–131 (GSLDAIPQDTDASSD) (connecting peptide). 20 consecutive propeptides follow at residues 164 to 168 (GSGAE), 202 to 220 (RGTG…PWGS), 236 to 253 (DTEL…TEVN), 271 to 275 (SGEAG), 293 to 297 (ADDQG), 315 to 321 (FDNSAGE), 339 to 341 (AGD), 359 to 366 (FDNDISGQ), 384 to 388 (SDQDN), 406 to 410 (ADDDG), 428 to 432 (ADEDD), 450 to 454 (GDEDD), 472 to 476 (ADEDD), 494 to 498 (SDEDD), 516 to 520 (SDEDD), 538 to 542 (ADEDD), 560 to 564 (NSPGL), 582 to 592 (NNEYYSGAENE), 610 to 614 (DQPGE), and 647 to 742 (NSAD…AGQM).

Expressed in pleural, pedal, abdominal, buccal and cerebral ganglia.

It is found in the secreted. Initiates organized rhythmic motor output of feeding circuit. The sequence is that of Feeding circuit activating peptides from Aplysia californica (California sea hare).